A 353-amino-acid chain; its full sequence is rRNA methyltransferase 1, mitochondrial (353 aa).

Residues 1–20 constitute a mitochondrion transit peptide; sequence MALLSTVRGATWGRLVTRHF. Positions 311–353 are disordered; that stretch reads PTEGERRQLLQDPQEPSARSEGLSMAQHPGLSSGPEKERQNEG.

Belongs to the class IV-like SAM-binding methyltransferase superfamily. RNA methyltransferase TrmH family.

Its subcellular location is the mitochondrion matrix. The catalysed reaction is guanosine(1145) in 16S rRNA + S-adenosyl-L-methionine = 2'-O-methylguanosine(1145) in 16S rRNA + S-adenosyl-L-homocysteine + H(+). Its function is as follows. S-adenosyl-L-methionine-dependent 2'-O-ribose methyltransferase that catalyzes the formation of 2'-O-methylguanosine at position 1145 (Gm1145) in the 16S mitochondrial large subunit ribosomal RNA (mtLSU rRNA), a universally conserved modification in the peptidyl transferase domain of the mtLSU rRNA. The protein is rRNA methyltransferase 1, mitochondrial of Homo sapiens (Human).